The chain runs to 539 residues: Probable protein kinase UbiB (539 aa).

A helical transmembrane segment spans residues 23–43 (DLLFALPLPWWMLAVRFVLPW). The 368-residue stretch at 125–492 (RFDETPLASA…WHDRKDEPVL (368 aa)) folds into the Protein kinase domain. ATP is bound by residues 131–139 (LASASVAQV) and Lys-153. The active-site Proton acceptor is Asp-288. The next 2 helical transmembrane spans lie at 494 to 514 (LIGAALLVGGAIQGWVMSEAA) and 517 to 537 (LLTLTAWPAAIMLIAGLYLIV).

The protein belongs to the ABC1 family. UbiB subfamily.

The protein localises to the cell inner membrane. It functions in the pathway cofactor biosynthesis; ubiquinone biosynthesis [regulation]. Functionally, is probably a protein kinase regulator of UbiI activity which is involved in aerobic coenzyme Q (ubiquinone) biosynthesis. The protein is Probable protein kinase UbiB of Pseudomonas syringae pv. tomato (strain ATCC BAA-871 / DC3000).